The following is an 822-amino-acid chain: MQDKNLVNVNLTKEMKASFIDYAMSVIVARALPDVRDGLKPVHRRILYGMNELGVTPDKPHKKSARITGDVMGKYHPHGDSSIYEAMVRMAQWWSYRYMLVDGHGNFGSMDGDSAAAQRYTEARMSKIALEMLRDINKNTVDFVDNYDANEREPLVLPARFPNLLVNGATGIAVGMATNIPPHNLGETIDAVKLVMDNPEVTTKDLMEVLPGPDFPTGALVMGKSGIHKAYETGKGSIVLRSRTEIETTKTGRERIVVTEFPYMVNKTKVHEHIVRLVQEKRIEGITAVRDESNREGVRFVIEVKRDASANVILNNLFKMTQMQTNFGFNMLAIQNGIPKILSLRQILDAYIEHQKEVVVRRTRFDKEKAEARAHILEGLLIALDHIDEVIRIIRASETDAEAQAELMSKFKLSERQSQAILDMRLRRLTGLERDKIQSEYDDLLALIADLADILAKPERVSQIIKDELDEVKRKFSDKRRTELMVGQVLSLEDEDLIEESDVLITLSNRGYIKRLDQDEFTAQKRGGRGVQGTGVKDDDFVRELVSTSTHDHLLFFTNKGRVYRLKGYEIPEYGRTAKGLPVVNLLKLDEDESIQTVINVESDRSDDAYLFFTTRHGIVKRTSVKEFANIRQNGLKALNLKDEDELINVLLAEGDMDIIIGTKFGYAVRFNQSAVRGMSRIATGVKGVNLREGDTVVGASLITDQDEVLIITEKGYGKRTVATEYPTKGRGGKGMQTAKITEKNGLLAGLMTVQGDEDLMIITDTGVMIRTNLANISQTGRATMGVKVMRLDQDAQIVTFTTVAVAEKEEVGTENETEGEA.

Positions 32-497 constitute a Topo IIA-type catalytic domain; it reads LPDVRDGLKP…QVLSLEDEDL (466 aa). Tyr120 acts as the O-(5'-phospho-DNA)-tyrosine intermediate in catalysis. Residues 524-530 carry the GyrA-box motif; the sequence is QKRGGRG.

This sequence belongs to the type II topoisomerase GyrA/ParC subunit family. Heterotetramer, composed of two GyrA and two GyrB chains. In the heterotetramer, GyrA contains the active site tyrosine that forms a transient covalent intermediate with DNA, while GyrB binds cofactors and catalyzes ATP hydrolysis.

It is found in the cytoplasm. The enzyme catalyses ATP-dependent breakage, passage and rejoining of double-stranded DNA.. In terms of biological role, a type II topoisomerase that negatively supercoils closed circular double-stranded (ds) DNA in an ATP-dependent manner to modulate DNA topology and maintain chromosomes in an underwound state. Negative supercoiling favors strand separation, and DNA replication, transcription, recombination and repair, all of which involve strand separation. Also able to catalyze the interconversion of other topological isomers of dsDNA rings, including catenanes and knotted rings. Type II topoisomerases break and join 2 DNA strands simultaneously in an ATP-dependent manner. The chain is DNA gyrase subunit A from Streptococcus pneumoniae (strain ATCC BAA-255 / R6).